A 505-amino-acid chain; its full sequence is ATP synthase subunit beta (505 aa).

The tract at residues 1–25 (MAKAATPKETAAVKKPAAPKKAATA) is disordered. 183 to 190 (GGAGVGKT) lines the ATP pocket.

The protein belongs to the ATPase alpha/beta chains family. As to quaternary structure, F-type ATPases have 2 components, CF(1) - the catalytic core - and CF(0) - the membrane proton channel. CF(1) has five subunits: alpha(3), beta(3), gamma(1), delta(1), epsilon(1). CF(0) has three main subunits: a(1), b(2) and c(9-12). The alpha and beta chains form an alternating ring which encloses part of the gamma chain. CF(1) is attached to CF(0) by a central stalk formed by the gamma and epsilon chains, while a peripheral stalk is formed by the delta and b chains.

It is found in the cell inner membrane. It catalyses the reaction ATP + H2O + 4 H(+)(in) = ADP + phosphate + 5 H(+)(out). Functionally, produces ATP from ADP in the presence of a proton gradient across the membrane. The catalytic sites are hosted primarily by the beta subunits. This chain is ATP synthase subunit beta, found in Sinorhizobium fredii (strain NBRC 101917 / NGR234).